The primary structure comprises 170 residues: Probable Brix domain-containing ribosomal biogenesis protein (170 aa).

One can recognise a Brix domain in the interval 6–170 (TRIVITSSRD…IKFLKMILEA (165 aa)).

Probably involved in the biogenesis of the ribosome. This is Probable Brix domain-containing ribosomal biogenesis protein from Saccharolobus solfataricus (strain ATCC 35092 / DSM 1617 / JCM 11322 / P2) (Sulfolobus solfataricus).